Here is a 140-residue protein sequence, read N- to C-terminus: ATP synthase epsilon chain (140 aa).

This sequence belongs to the ATPase epsilon chain family. As to quaternary structure, F-type ATPases have 2 components, CF(1) - the catalytic core - and CF(0) - the membrane proton channel. CF(1) has five subunits: alpha(3), beta(3), gamma(1), delta(1), epsilon(1). CF(0) has three main subunits: a, b and c.

It localises to the cell inner membrane. Its function is as follows. Produces ATP from ADP in the presence of a proton gradient across the membrane. This Chromobacterium violaceum (strain ATCC 12472 / DSM 30191 / JCM 1249 / CCUG 213 / NBRC 12614 / NCIMB 9131 / NCTC 9757 / MK) protein is ATP synthase epsilon chain.